The sequence spans 1088 residues: DNA-directed RNA polymerase subunit beta (1088 aa).

Belongs to the RNA polymerase beta chain family. In terms of assembly, in plastids the minimal PEP RNA polymerase catalytic core is composed of four subunits: alpha, beta, beta', and beta''. When a (nuclear-encoded) sigma factor is associated with the core the holoenzyme is formed, which can initiate transcription.

It localises to the plastid. Its subcellular location is the chloroplast. It catalyses the reaction RNA(n) + a ribonucleoside 5'-triphosphate = RNA(n+1) + diphosphate. In terms of biological role, DNA-dependent RNA polymerase catalyzes the transcription of DNA into RNA using the four ribonucleoside triphosphates as substrates. The protein is DNA-directed RNA polymerase subunit beta of Chlorokybus atmophyticus (Soil alga).